A 185-amino-acid chain; its full sequence is Adenine phosphoribosyltransferase (185 aa).

It belongs to the purine/pyrimidine phosphoribosyltransferase family. In terms of assembly, homodimer.

The protein localises to the cytoplasm. It carries out the reaction AMP + diphosphate = 5-phospho-alpha-D-ribose 1-diphosphate + adenine. The protein operates within purine metabolism; AMP biosynthesis via salvage pathway; AMP from adenine: step 1/1. Functionally, catalyzes a salvage reaction resulting in the formation of AMP, that is energically less costly than de novo synthesis. The protein is Adenine phosphoribosyltransferase of Rubrobacter xylanophilus (strain DSM 9941 / JCM 11954 / NBRC 16129 / PRD-1).